Reading from the N-terminus, the 453-residue chain is UDP-glycosyltransferase 76E1 (453 aa).

UDP-alpha-D-glucose contacts are provided by residues S272, A331 to Q333, H348 to E356, and T370 to Q373.

The protein belongs to the UDP-glycosyltransferase family.

Functionally, possesses low quercetin 3-O-glucosyltransferase and 7-O-glucosyltransferase activities in vitro. This Arabidopsis thaliana (Mouse-ear cress) protein is UDP-glycosyltransferase 76E1 (UGT76E1).